The chain runs to 280 residues: uncharacterized protein (280 aa).

Residue 3-29 (KKIAIVTGASSGFGLLAAVKLARSFFV) participates in NADP(+) binding. Substrate is bound at residue serine 139. The active-site Proton acceptor is tyrosine 152.

This sequence belongs to the short-chain dehydrogenases/reductases (SDR) family.

This is an uncharacterized protein from Bacillus subtilis (strain 168).